Reading from the N-terminus, the 372-residue chain is Glutamate 5-kinase (372 aa).

Lys14 is an ATP binding site. Substrate contacts are provided by Ser54, Asp141, and Asn153. 173–174 (TD) is a binding site for ATP. Residues 280–358 (RGRVIIDAGA…SEIESVLGHL (79 aa)) form the PUA domain.

It belongs to the glutamate 5-kinase family.

Its subcellular location is the cytoplasm. The enzyme catalyses L-glutamate + ATP = L-glutamyl 5-phosphate + ADP. The protein operates within amino-acid biosynthesis; L-proline biosynthesis; L-glutamate 5-semialdehyde from L-glutamate: step 1/2. Functionally, catalyzes the transfer of a phosphate group to glutamate to form L-glutamate 5-phosphate. This chain is Glutamate 5-kinase, found in Cupriavidus metallidurans (strain ATCC 43123 / DSM 2839 / NBRC 102507 / CH34) (Ralstonia metallidurans).